A 39-amino-acid polypeptide reads, in one-letter code: Contryphan-Cal1 (39 aa).

An N-terminal signal peptide occupies residues 1-20; it reads MTRTAVLLLTLLFLVAMAAS. A disulfide bridge connects residues cysteine 29 and cysteine 35.

Expressed by the venom duct.

The protein localises to the secreted. Probable neurotoxin. The protein is Contryphan-Cal1 of Californiconus californicus (California cone).